A 48-amino-acid polypeptide reads, in one-letter code: Fimbrial assembly protein, serogroup E2 (48 aa).

This is Fimbrial assembly protein, serogroup E2 (fimB) from Dichelobacter nodosus (Bacteroides nodosus).